The following is a 185-amino-acid chain: CASP-like protein SELMODRAFT_413556 (185 aa).

Topologically, residues 1 to 89 are cytoplasmic; sequence MATLPLSLIF…AVTVLFYLAK (89 aa). The helical transmembrane segment at 90 to 110 threads the bilayer; that stretch reads LVFGILGLALSIIWLLHIIVF. At 111–131 the chain is on the extracellular side; the sequence is MLVNPPAFPFLNQVFIQLDSA. Residues 132–152 traverse the membrane as a helical segment; it reads WGLLGTTAFAIFCYYLIMSVI. The Cytoplasmic portion of the chain corresponds to 153-163; that stretch reads SGEMHSIHPMK. A helical membrane pass occupies residues 164–184; it reads YQGTLMNSFLFNVAIILLCST. Position 185 (Arg-185) is a topological domain, extracellular.

This sequence belongs to the Casparian strip membrane proteins (CASP) family. Homodimer and heterodimers.

Its subcellular location is the cell membrane. In Selaginella moellendorffii (Spikemoss), this protein is CASP-like protein SELMODRAFT_413556.